A 181-amino-acid chain; its full sequence is Inner membrane-spanning protein YciB (181 aa).

The next 5 membrane-spanning stretches (helical) occupy residues 10–30 (LIIF…GALI), 50–70 (MHLI…VFHD), 72–92 (AFIK…LGVS), 118–138 (VTWY…YVAF), and 148–168 (FKVF…VFYL).

Belongs to the YciB family.

The protein localises to the cell inner membrane. Plays a role in cell envelope biogenesis, maintenance of cell envelope integrity and membrane homeostasis. This is Inner membrane-spanning protein YciB from Shewanella sp. (strain MR-4).